Consider the following 382-residue polypeptide: Cell division protein FtsZ (382 aa).

Residues 21-25, 108-110, E139, R143, and D187 contribute to the GTP site; these read GGGNN and GTG. The segment at 320–382 is disordered; it reads KDVTKPQRPS…TFLRNRNKRG (63 aa). The span at 326–341 shows a compositional bias: polar residues; the sequence is QRPSLNQSIKTHNQSV. Positions 342 to 351 are enriched in basic and acidic residues; the sequence is PKREPKREEP. Over residues 352-365 the composition is skewed to polar residues; that stretch reads QQQNTVSRHTSQPA.

The protein belongs to the FtsZ family. In terms of assembly, homodimer. Polymerizes to form a dynamic ring structure in a strictly GTP-dependent manner. Interacts directly with several other division proteins. Interacts with FtsA. Interacts with Phi29 DNA replication protein 1. Interacts with the cell division inhibitor MciZ.

Its subcellular location is the cytoplasm. Its activity is regulated as follows. During sporulation, is negatively regulated by MciZ, which binds to FtsZ and inhibits its polymerization and the formation of the Z ring. Functionally, essential cell division protein that forms a contractile ring structure (Z ring) at the future cell division site. The regulation of the ring assembly controls the timing and the location of cell division. One of the functions of the FtsZ ring is to recruit other cell division proteins to the septum to produce a new cell wall between the dividing cells. Binds GTP and shows GTPase activity. The protein is Cell division protein FtsZ of Bacillus subtilis (strain 168).